Consider the following 354-residue polypeptide: Protein RecA (354 aa).

ATP is bound at residue 65-72; sequence GPESSGKT.

The protein belongs to the RecA family.

The protein localises to the cytoplasm. Its function is as follows. Can catalyze the hydrolysis of ATP in the presence of single-stranded DNA, the ATP-dependent uptake of single-stranded DNA by duplex DNA, and the ATP-dependent hybridization of homologous single-stranded DNAs. It interacts with LexA causing its activation and leading to its autocatalytic cleavage. The sequence is that of Protein RecA from Vibrio cholerae serotype O1 (strain ATCC 39315 / El Tor Inaba N16961).